Here is a 148-residue protein sequence, read N- to C-terminus: Large ribosomal subunit protein bL9 (148 aa).

It belongs to the bacterial ribosomal protein bL9 family.

Its function is as follows. Binds to the 23S rRNA. This is Large ribosomal subunit protein bL9 from Methylococcus capsulatus (strain ATCC 33009 / NCIMB 11132 / Bath).